The chain runs to 61 residues: Inner membrane protein p12 (61 aa).

A helical transmembrane segment spans residues 16-36 (LLIVAIIVVIMAIMLYYFWWM).

This sequence belongs to the asfivirus inner membrane protein p12 family. As to quaternary structure, homomultimer; disulfide-linked. In terms of processing, not glycosylated.

The protein resides in the virion membrane. The polypeptide is Inner membrane protein p12 (Ornithodoros (relapsing fever ticks)).